Consider the following 467-residue polypeptide: Venom prothrombin activator pseutarin-C catalytic subunit (467 aa).

Residues methionine 1–serine 22 form the signal peptide. A propeptide spanning residues asparagine 23–arginine 40 is cleaved from the precursor. A Gla domain is found at alanine 41–aspartate 86. Residues glutamate 46, glutamate 47, glutamate 54, glutamate 56, glutamate 59, glutamate 60, glutamate 65, glutamate 66, glutamate 69, and glutamate 72 each carry the 4-carboxyglutamate modification. Cysteine 57 and cysteine 62 form a disulfide bridge. One can recognise an EGF-like 1; calcium-binding domain in the interval aspartate 86–glutamate 122. 11 disulfides stabilise this stretch: cysteine 90-cysteine 101, cysteine 95-cysteine 110, cysteine 112-cysteine 121, cysteine 129-cysteine 140, cysteine 136-cysteine 149, cysteine 151-cysteine 164, cysteine 172-cysteine 329, cysteine 216-cysteine 221, cysteine 236-cysteine 252, cysteine 377-cysteine 391, and cysteine 402-cysteine 430. Serine 92 is a glycosylation site (O-linked (Hex...) serine). The EGF-like 2 domain maps to cysteine 129–cysteine 164. Positions arginine 182–arginine 209 are cleaved as a propeptide — activation peptide. A Peptidase S1 domain is found at isoleucine 210 to arginine 454. Histidine 251 serves as the catalytic Charge relay system. N-linked (GlcNAc...) asparagine glycosylation is present at asparagine 254. Aspartate 309 acts as the Charge relay system in catalysis. The Charge relay system role is filled by serine 406.

The protein belongs to the peptidase S1 family. Snake venom subfamily. As to quaternary structure, heterodimer of a light and a heavy chains; disulfide-linked. Is associated with pseutarin-C non-catalytic subunit (AC Q7SZN0) in a non-covalent manner. Gamma-carboxyglutamate residues are formed by vitamin K dependent carboxylation. These residues are essential for the binding of calcium. In terms of tissue distribution, expressed by the venom gland.

It is found in the secreted. The catalysed reaction is Selective cleavage of Arg-|-Thr and then Arg-|-Ile bonds in prothrombin to form thrombin.. Activated by calcium and negatively charged phospholipids. Functionally, snake prothrombin activator that attacks the hemostatic system of prey. This non-catalytic subunit is functionally similar to blood coagulation factor V. It serves as a critical cofactor for the prothrombinase activity of the catalytic subunit, which is similar to the blood coagulation factor X. The complex converts prothrombin to thrombin by sequential cleavage at two positions, Arg-320 followed by Arg-271. Cleavage at Arg-320 produces an active intermediate known as meizothrombin. Meizothrombin is the 'second' substrate for prothrombinase, and it docks in an altered manner to present the second cleavage site (271). Cleavage at Arg-271 releases active thrombin from its pro-fragment. This order of events is reversed if the protease component of prothrombinase is used on its own, suggesting that the 271 site is inherently more accessible to proteolysis. The complex converts prothrombin to thrombin in presence but also in the absence of membrane. The protein is Venom prothrombin activator pseutarin-C catalytic subunit of Pseudonaja textilis (Eastern brown snake).